Here is a 301-residue protein sequence, read N- to C-terminus: tRNA pseudouridine synthase B (301 aa).

The Nucleophile role is filled by D38.

It belongs to the pseudouridine synthase TruB family. Type 1 subfamily.

It carries out the reaction uridine(55) in tRNA = pseudouridine(55) in tRNA. Its function is as follows. Responsible for synthesis of pseudouridine from uracil-55 in the psi GC loop of transfer RNAs. The polypeptide is tRNA pseudouridine synthase B (Ehrlichia canis (strain Jake)).